The sequence spans 112 residues: Colipase (112 aa).

Residues Met1–Ala17 form the signal peptide. A propeptide spans Val18–Arg22 (enterostatin, activation peptide). Disulfide bonds link Cys34–Cys45, Cys40–Cys56, Cys44–Cys78, Cys66–Cys86, and Cys80–Cys104.

It belongs to the colipase family. In terms of assembly, forms a 1:1 stoichiometric complex with pancreatic lipase. In terms of tissue distribution, expressed by the pancreas.

It localises to the secreted. Its function is as follows. Colipase is a cofactor of pancreatic lipase. It allows the lipase to anchor itself to the lipid-water interface. Without colipase the enzyme is washed off by bile salts, which have an inhibitory effect on the lipase. Enterostatin has a biological activity as a satiety signal. The chain is Colipase (CLPS) from Sus scrofa (Pig).